A 334-amino-acid chain; its full sequence is D-alanine--D-alanine ligase (334 aa).

The 206-residue stretch at 124–329 (KMWFSALGIP…FAQYLSGNIL (206 aa)) folds into the ATP-grasp domain. Residue 154–209 (ALAKWGSIFIKAASQGSSVGCYRVDSIEQLASSLEEAFTFSPYVVIEKTITARELE) coordinates ATP. Residues D283, E296, and N298 each coordinate Mg(2+).

It belongs to the D-alanine--D-alanine ligase family. It depends on Mg(2+) as a cofactor. The cofactor is Mn(2+).

It is found in the cytoplasm. It catalyses the reaction 2 D-alanine + ATP = D-alanyl-D-alanine + ADP + phosphate + H(+). Its pathway is cell wall biogenesis; peptidoglycan biosynthesis. Its function is as follows. Cell wall formation. This is D-alanine--D-alanine ligase from Shewanella pealeana (strain ATCC 700345 / ANG-SQ1).